Consider the following 97-residue polypeptide: MSRKCELTGVGVLYGNNVSHSQRKTRRRFEPNLRSVKFTSDITAGKYRLSVNARCISSVEKAGGFDAYILQADDNVLSSNARAIKKKIIQTKTAKSL.

This sequence belongs to the bacterial ribosomal protein bL28 family.

This Rickettsia akari (strain Hartford) protein is Large ribosomal subunit protein bL28.